The sequence spans 76 residues: Conotoxin ArMKLT2-032 (76 aa).

Residues 1–22 form the signal peptide; that stretch reads MKLTCVLIIAVLFLTACQLTTG. Positions 23-46 are excised as a propeptide; that stretch reads ETYSRGEQKDHALRSTDKNSKLTR. Gln-47 carries the pyrrolidone carboxylic acid modification. 3 disulfide bridges follow: Cys-48–Cys-62, Cys-55–Cys-66, and Cys-61–Cys-73.

It belongs to the conotoxin O1 superfamily. In terms of tissue distribution, expressed by the venom duct.

It localises to the secreted. In Conus arenatus (Sand-dusted cone), this protein is Conotoxin ArMKLT2-032.